We begin with the raw amino-acid sequence, 905 residues long: Heme/hemopexin-binding protein (905 aa).

Positions 1 to 21 (MYKLNVISLIILTTYTGATYA) are cleaved as a signal peptide.

It localises to the secreted. Functionally, binds heme/hemopexin complexes. The sequence is that of Heme/hemopexin-binding protein (hxuA) from Haemophilus influenzae (strain ATCC 51907 / DSM 11121 / KW20 / Rd).